Reading from the N-terminus, the 272-residue chain is Ribosomal RNA small subunit methyltransferase A (272 aa).

Residues N20, L22, G47, E68, D93, and N114 each coordinate S-adenosyl-L-methionine.

It belongs to the class I-like SAM-binding methyltransferase superfamily. rRNA adenine N(6)-methyltransferase family. RsmA subfamily.

It is found in the cytoplasm. The catalysed reaction is adenosine(1518)/adenosine(1519) in 16S rRNA + 4 S-adenosyl-L-methionine = N(6)-dimethyladenosine(1518)/N(6)-dimethyladenosine(1519) in 16S rRNA + 4 S-adenosyl-L-homocysteine + 4 H(+). In terms of biological role, specifically dimethylates two adjacent adenosines (A1518 and A1519) in the loop of a conserved hairpin near the 3'-end of 16S rRNA in the 30S particle. May play a critical role in biogenesis of 30S subunits. The protein is Ribosomal RNA small subunit methyltransferase A of Aliivibrio fischeri (strain ATCC 700601 / ES114) (Vibrio fischeri).